We begin with the raw amino-acid sequence, 795 residues long: Cyclin-dependent kinase 11B (795 aa).

Over residues 17-60 (LQEKKRRKEQEEKAEIKRLKNSDDRDSKRDSLEEGELRDHRMEI) the composition is skewed to basic and acidic residues. Positions 17–412 (LQEKKRRKEQ…EGDYVPDSPA (396 aa)) are disordered. Phosphoserine occurs at positions 47 and 72. A compositionally biased stretch (basic residues) spans 95-113 (EKAHHRKDEKRKEKRRHRS). Basic and acidic residues-rich tracts occupy residues 114 to 131 (HSAE…EREH), 138 to 227 (REEQ…DKVK), 238 to 253 (PPRE…KPGE), and 264 to 276 (QLKE…RDLL). Ser115 bears the Phosphoserine mark. Phosphoserine is present on Ser283. The segment covering 291 to 302 (SAESSSAESGSG) has biased composition (low complexity). Acidic residues-rich tracts occupy residues 303–364 (SEEE…EERE) and 383–392 (ESEEAEEEVG). Residues 438–723 (FQCLNRIEEG…AEDGLKHEYF (286 aa)) form the Protein kinase domain. Residues 444 to 452 (IEEGTYGVV) and Lys467 contribute to the ATP site. A Phosphoserine; by CDK7 modification is found at Ser482. A Phosphothreonine; by CDK7 modification is found at Thr488. Residue Asp562 is the Proton acceptor of the active site. Position 589 is a phosphoserine (Ser589). Position 594 is a phosphotyrosine (Tyr594). The residue at position 595 (Thr595) is a Phosphothreonine. Residue Lys641 forms a Glycyl lysine isopeptide (Lys-Gly) (interchain with G-Cter in SUMO2) linkage. The tract at residues 733–795 (SMFPTWPAKS…AAGPGFSLKF (63 aa)) is disordered. Thr751 bears the Phosphothreonine mark. Ser752 carries the post-translational modification Phosphoserine.

The protein belongs to the protein kinase superfamily. CMGC Ser/Thr protein kinase family. CDC2/CDKX subfamily. Cleaved isoform SV9 (p110C) binds to the serine/threonine kinase PAK1 and RANBP9. p110C interacts with RNPS1. Isoform 7, but not isoform SV9, nor its cleavage product p110C, interacts with CCND3. Interacts with CCNL1 and CCNL2. Forms complexes with pre-mRNA-splicing factors, including at least SRSF1, SRSF2 and SRSF7/SLU7. Interacts with isoform 5 of MYO18A. As to quaternary structure, (Microbial infection) Interacts with human herpes virus 1 (HHV-1) transcriptional regulator ICP22. Requires Mg(2+) as cofactor. In terms of processing, during FAS- or TNF-induced apoptosis, isoform SV9 is cleaved by caspases to produce p110C, a fragment that contains the C-terminal kinase domain. Phosphorylation at Ser-115 creates a binding site for 14-3-3 proteins. p110C can be autophosphorylated. In terms of tissue distribution, expressed ubiquitously. Some evidence of isoform-specific tissue distribution.

The protein resides in the cytoplasm. The protein localises to the nucleus. It catalyses the reaction L-seryl-[protein] + ATP = O-phospho-L-seryl-[protein] + ADP + H(+). It carries out the reaction L-threonyl-[protein] + ATP = O-phospho-L-threonyl-[protein] + ADP + H(+). Its activity is regulated as follows. Phosphorylation at Thr-448 or Tyr-449 inactivates the enzyme, while phosphorylation at Thr-595 activates it. Its function is as follows. Plays multiple roles in cell cycle progression, cytokinesis and apoptosis. Involved in pre-mRNA splicing in a kinase activity-dependent manner. Isoform 7 may act as a negative regulator of normal cell cycle progression. The polypeptide is Cyclin-dependent kinase 11B (CDK11B) (Homo sapiens (Human)).